The sequence spans 531 residues: CTP synthase (531 aa).

Residues 1 to 267 (MTKYIIITGG…ASKILSKLNL (267 aa)) are amidoligase domain. CTP is bound at residue serine 13. Serine 13 is a UTP binding site. ATP is bound at residue 14–19 (SVGKGT). Tyrosine 54 is an L-glutamine binding site. Aspartate 71 contacts ATP. The Mg(2+) site is built by aspartate 71 and glutamate 141. CTP is bound by residues 148-150 (DIE), 188-193 (KTKPLQ), and lysine 224. Residues 188 to 193 (KTKPLQ) and lysine 224 contribute to the UTP site. Residues 292–531 (KIALVGKYTK…IGFLRAAAGV (240 aa)) enclose the Glutamine amidotransferase type-1 domain. Glycine 355 lines the L-glutamine pocket. Cysteine 382 serves as the catalytic Nucleophile; for glutamine hydrolysis. L-glutamine is bound by residues 383 to 386 (YGMQ), glutamate 406, and arginine 463. Active-site residues include histidine 507 and glutamate 509.

This sequence belongs to the CTP synthase family. As to quaternary structure, homotetramer.

The catalysed reaction is UTP + L-glutamine + ATP + H2O = CTP + L-glutamate + ADP + phosphate + 2 H(+). It carries out the reaction L-glutamine + H2O = L-glutamate + NH4(+). The enzyme catalyses UTP + NH4(+) + ATP = CTP + ADP + phosphate + 2 H(+). Its pathway is pyrimidine metabolism; CTP biosynthesis via de novo pathway; CTP from UDP: step 2/2. Allosterically activated by GTP, when glutamine is the substrate; GTP has no effect on the reaction when ammonia is the substrate. The allosteric effector GTP functions by stabilizing the protein conformation that binds the tetrahedral intermediate(s) formed during glutamine hydrolysis. Inhibited by the product CTP, via allosteric rather than competitive inhibition. Catalyzes the ATP-dependent amination of UTP to CTP with either L-glutamine or ammonia as the source of nitrogen. Regulates intracellular CTP levels through interactions with the four ribonucleotide triphosphates. This chain is CTP synthase, found in Sulfurisphaera tokodaii (strain DSM 16993 / JCM 10545 / NBRC 100140 / 7) (Sulfolobus tokodaii).